The chain runs to 144 residues: L-fucose mutarotase (144 aa).

His22 functions as the Proton donor in the catalytic mechanism. Substrate-binding positions include Asp30, Arg109, and 131 to 133 (YGN).

The protein belongs to the RbsD / FucU family. FucU mutarotase subfamily. As to quaternary structure, homodecamer.

Its subcellular location is the cytoplasm. It catalyses the reaction alpha-L-fucose = beta-L-fucose. It participates in carbohydrate metabolism; L-fucose metabolism. In terms of biological role, involved in the anomeric conversion of L-fucose. The protein is L-fucose mutarotase of Haemophilus influenzae (strain 86-028NP).